The primary structure comprises 410 residues: Multifunctional CCA protein (410 aa).

Positions 8 and 11 each coordinate ATP. CTP is bound by residues Gly8 and Arg11. Mg(2+)-binding residues include Asp21 and Asp23. The ATP site is built by Arg91, Arg138, and Arg141. Positions 91, 138, and 141 each coordinate CTP. Residues 229–347 form the HD domain; the sequence is TGIHQEMVSD…AQLALVCEAD (119 aa).

The protein belongs to the tRNA nucleotidyltransferase/poly(A) polymerase family. Bacterial CCA-adding enzyme type 1 subfamily. As to quaternary structure, monomer. Can also form homodimers and oligomers. Mg(2+) serves as cofactor. Ni(2+) is required as a cofactor.

It carries out the reaction a tRNA precursor + 2 CTP + ATP = a tRNA with a 3' CCA end + 3 diphosphate. It catalyses the reaction a tRNA with a 3' CCA end + 2 CTP + ATP = a tRNA with a 3' CCACCA end + 3 diphosphate. Catalyzes the addition and repair of the essential 3'-terminal CCA sequence in tRNAs without using a nucleic acid template. Adds these three nucleotides in the order of C, C, and A to the tRNA nucleotide-73, using CTP and ATP as substrates and producing inorganic pyrophosphate. tRNA 3'-terminal CCA addition is required both for tRNA processing and repair. Also involved in tRNA surveillance by mediating tandem CCA addition to generate a CCACCA at the 3' terminus of unstable tRNAs. While stable tRNAs receive only 3'-terminal CCA, unstable tRNAs are marked with CCACCA and rapidly degraded. The protein is Multifunctional CCA protein of Xanthomonas axonopodis pv. citri (strain 306).